Here is a 628-residue protein sequence, read N- to C-terminus: Propionate--CoA ligase (628 aa).

Belongs to the ATP-dependent AMP-binding enzyme family.

It catalyses the reaction propanoate + ATP + CoA = propanoyl-CoA + AMP + diphosphate. It functions in the pathway organic acid metabolism; propanoate degradation. Catalyzes the synthesis of propionyl-CoA from propionate and CoA. Also converts acetate to acetyl-CoA but with a lower specific activity. The chain is Propionate--CoA ligase (prpE) from Escherichia coli (strain K12).